Consider the following 601-residue polypeptide: Zinc finger protein 37 (601 aa).

Residues 1–70 (MATPEPAESD…VRANKNSSSS (70 aa)) form the KRAB domain. The residue at position 3 (Thr-3) is a Phosphothreonine. Residue Ser-9 is modified to Phosphoserine. The segment covering 30–43 (ETCSNPASMGNQDP) has biased composition (polar residues). Residues 30–254 (ETCSNPASMG…SKSDKAPGSG (225 aa)) form a disordered region. The segment covering 60-70 (SVRANKNSSSS) has biased composition (low complexity). The span at 77–88 (TGTSAKVQQDGA) shows a compositional bias: polar residues. Basic and acidic residues-rich tracts occupy residues 115–136 (KSSE…PSEK), 164–174 (KKPDTANEYRK), and 183–238 (VNRD…EKRK). Residues 257-279 (YECNQCGKVLSHKQGLLDHQRTH) form a C2H2-type 1 zinc finger. A C2H2-type 2; atypical zinc finger spans residues 285-303 (YECYECGIAFSQKSHLVVH). 10 consecutive C2H2-type zinc fingers follow at residues 314–337 (YECV…RISH), 343–365 (YKCN…IRSH), 371–393 (YECK…VRTH), 399–421 (YECN…MRIH), 427–449 (FECT…QRTH), 455–477 (YKCK…MRTH), 483–505 (FECN…QRVH), 511–533 (YECV…QRTH), 539–561 (FECY…QRSH), and 570–592 (YECV…MKTH).

This sequence belongs to the krueppel C2H2-type zinc-finger protein family. Expressed in testes, brain, kidney, spleen, thymus, lung, and at low levels in liver.

It is found in the nucleus. Its function is as follows. May be involved in transcriptional regulation. This Rattus norvegicus (Rat) protein is Zinc finger protein 37 (Zfp37).